Reading from the N-terminus, the 146-residue chain is VEWTDFERATIKDIFSKLEYDVVGPATLARCLVVYPWTQRYFAKFGNLYTATAIAENAMVSKHGITILHGLDRAVKNMDDIKNTYAELSVLHSEKLHVDPDNFKLLADCLTIVVAARFGSAFTGEVQAAFEKFMAVVVSSLGRQYH.

The Globin domain occupies 2 to 146; sequence EWTDFERATI…VVSSLGRQYH (145 aa). The heme b site is built by His-63 and His-92.

The protein belongs to the globin family. In terms of assembly, heterotetramer of two alpha chains and two beta chains. Red blood cells.

Its function is as follows. Involved in oxygen transport from gills to the various peripheral tissues. The polypeptide is Hemoglobin subunit beta-0 (hbb0) (Pagothenia borchgrevinki (Bald rockcod)).